Reading from the N-terminus, the 1027-residue chain is Protein translocase subunit SecA (1027 aa).

ATP contacts are provided by residues Gln-143, 161–165, and Asp-661; that span reads GEGKT. Residues 981 to 1027 form a disordered region; sequence EESGTSNADNAGDNGPQTVIAEKKPGRNDLCPCGSGKKYKNCHGQQP. Zn(2+) is bound by residues Cys-1011, Cys-1013, Cys-1022, and His-1023.

It belongs to the SecA family. Monomer and homodimer. Part of the essential Sec protein translocation apparatus which comprises SecA, SecYEG and auxiliary proteins SecDF. Other proteins may also be involved. It depends on Zn(2+) as a cofactor.

The protein resides in the cell inner membrane. It localises to the cytoplasm. The catalysed reaction is ATP + H2O + cellular proteinSide 1 = ADP + phosphate + cellular proteinSide 2.. Part of the Sec protein translocase complex. Interacts with the SecYEG preprotein conducting channel. Has a central role in coupling the hydrolysis of ATP to the transfer of proteins into and across the cell membrane, serving as an ATP-driven molecular motor driving the stepwise translocation of polypeptide chains across the membrane. The sequence is that of Protein translocase subunit SecA from Chlorobium limicola (strain DSM 245 / NBRC 103803 / 6330).